The sequence spans 586 residues: Anaerobic glycerol-3-phosphate dehydrogenase subunit A1 (586 aa).

Position 6–34 (6–34 (SVLVIGGGSTGTGIARDLAMRGLDVTLVE)) interacts with FAD. The tract at residues 559 to 586 (GGAVADGGRERAADRADDDALGGADGDN) is disordered. Residues 574–586 (ADDDALGGADGDN) show a composition bias toward acidic residues.

Belongs to the FAD-dependent glycerol-3-phosphate dehydrogenase family. As to quaternary structure, composed of a catalytic GlpA/B dimer and of membrane bound GlpC. FAD is required as a cofactor. Requires FMN as cofactor.

The protein resides in the cell membrane. The enzyme catalyses a quinone + sn-glycerol 3-phosphate = dihydroxyacetone phosphate + a quinol. Its pathway is polyol metabolism; glycerol degradation via glycerol kinase pathway; glycerone phosphate from sn-glycerol 3-phosphate (anaerobic route): step 1/1. Its activity is regulated as follows. Up-regulated by glycerol and no inhibition by glucose. Conversion of glycerol 3-phosphate to dihydroxyacetone phosphate. Required for growth on glycerol and for glycerol metabolism. The polypeptide is Anaerobic glycerol-3-phosphate dehydrogenase subunit A1 (gpdA1) (Haloferax volcanii (strain ATCC 29605 / DSM 3757 / JCM 8879 / NBRC 14742 / NCIMB 2012 / VKM B-1768 / DS2) (Halobacterium volcanii)).